Consider the following 382-residue polypeptide: Biotin synthase (382 aa).

In terms of domain architecture, Radical SAM core spans 83-318 (CCGNVVDLCS…EQILRYAGGR (236 aa)). [4Fe-4S] cluster is bound by residues Cys101, Cys105, and Cys108. [2Fe-2S] cluster is bound by residues Cys146, Cys183, Cys243, and Arg313.

This sequence belongs to the radical SAM superfamily. Biotin synthase family. In terms of assembly, homodimer. [4Fe-4S] cluster is required as a cofactor. Requires [2Fe-2S] cluster as cofactor.

It catalyses the reaction (4R,5S)-dethiobiotin + (sulfur carrier)-SH + 2 reduced [2Fe-2S]-[ferredoxin] + 2 S-adenosyl-L-methionine = (sulfur carrier)-H + biotin + 2 5'-deoxyadenosine + 2 L-methionine + 2 oxidized [2Fe-2S]-[ferredoxin]. It functions in the pathway cofactor biosynthesis; biotin biosynthesis; biotin from 7,8-diaminononanoate: step 2/2. Functionally, catalyzes the conversion of dethiobiotin (DTB) to biotin by the insertion of a sulfur atom into dethiobiotin via a radical-based mechanism. The polypeptide is Biotin synthase (Crocosphaera subtropica (strain ATCC 51142 / BH68) (Cyanothece sp. (strain ATCC 51142))).